Reading from the N-terminus, the 124-residue chain is Small ribosomal subunit protein uS12 (124 aa).

The tract at residues 105 to 124 (SGVNDRRQGRSKYGAKRPKS) is disordered. The span at 113 to 124 (GRSKYGAKRPKS) shows a compositional bias: basic residues.

The protein belongs to the universal ribosomal protein uS12 family. Part of the 30S ribosomal subunit. Contacts proteins S8 and S17. May interact with IF1 in the 30S initiation complex.

With S4 and S5 plays an important role in translational accuracy. In terms of biological role, interacts with and stabilizes bases of the 16S rRNA that are involved in tRNA selection in the A site and with the mRNA backbone. Located at the interface of the 30S and 50S subunits, it traverses the body of the 30S subunit contacting proteins on the other side and probably holding the rRNA structure together. The combined cluster of proteins S8, S12 and S17 appears to hold together the shoulder and platform of the 30S subunit. This Idiomarina loihiensis (strain ATCC BAA-735 / DSM 15497 / L2-TR) protein is Small ribosomal subunit protein uS12.